The chain runs to 279 residues: MFLYVVCSLAVCFRGLLSLSLQSSPNLCPGVISTPYTLTCPSNTSLPTSWYCNDTRLLRVTQGTLTVDTLICNFSCVGQSGHRYSLWITWYAQPVLQTFCGQPSNTVTCGQHVTLYCSTSGNNVTVWHLPNGQNETVSQTKYYNFTLMNQTEGCYACSNGLSSRLSNRLCFSARCANITPETHTVSVSSTTGFRTFATAPTLFVMKEVKSTYLYIQEHLLVFMTLVALIGTMCGILGTIIFAHCQKQRDSNKTVPQQLQDYYSLHDLCTEDYTQPVDWY.

The signal sequence occupies residues 1–18; that stretch reads MFLYVVCSLAVCFRGLLS. Residues 19–220 are Extracellular-facing; sequence LSLQSSPNLC…TYLYIQEHLL (202 aa). A helical transmembrane segment spans residues 221-241; sequence VFMTLVALIGTMCGILGTIIF. Over 242–279 the chain is Cytoplasmic; it reads AHCQKQRDSNKTVPQQLQDYYSLHDLCTEDYTQPVDWY.

Homooligomer.

It localises to the host membrane. In terms of biological role, promotes host cell survival pathways and may contribute to pathogenesis by preventing infected cells from undergoing apoptosis. Acts in host B-cells by mimicking the activated B-cell receptor complex. The cytoplasmic tail of K1 can induce the phosphorylation of a number of different kinases, leading to the activation of survival signaling pathways. This Human herpesvirus 8 type P (isolate GK18) (HHV-8) protein is Protein K1 (K1).